Consider the following 189-residue polypeptide: Large ribosomal subunit protein eL20 (189 aa).

The protein belongs to the eukaryotic ribosomal protein eL20 family.

Its subcellular location is the cytoplasm. The sequence is that of Large ribosomal subunit protein eL20 (RPL18A) from Tetrahymena thermophila.